A 91-amino-acid chain; its full sequence is NADH-ubiquinone oxidoreductase chain 4L (91 aa).

Transmembrane regions (helical) follow at residues 2–22 and 38–58; these read LIMI…QTHL and LGLG…ALVL.

The protein belongs to the complex I subunit 4L family.

The protein localises to the mitochondrion membrane. The catalysed reaction is a ubiquinone + NADH + 5 H(+)(in) = a ubiquinol + NAD(+) + 4 H(+)(out). Its function is as follows. Core subunit of the mitochondrial membrane respiratory chain NADH dehydrogenase (Complex I) that is believed to belong to the minimal assembly required for catalysis. Complex I functions in the transfer of electrons from NADH to the respiratory chain. The immediate electron acceptor for the enzyme is believed to be ubiquinone. This Branchiostoma floridae (Florida lancelet) protein is NADH-ubiquinone oxidoreductase chain 4L (ND4L).